The chain runs to 266 residues: Glucosamine-6-phosphate deaminase (266 aa).

The active-site Proton acceptor; for enolization step is aspartate 72. The active-site For ring-opening step is the aspartate 141. The Proton acceptor; for ring-opening step role is filled by histidine 143. Catalysis depends on glutamate 148, which acts as the For ring-opening step.

It belongs to the glucosamine/galactosamine-6-phosphate isomerase family. NagB subfamily. In terms of assembly, homohexamer; trimer of disulfide-linked dimers.

It carries out the reaction alpha-D-glucosamine 6-phosphate + H2O = beta-D-fructose 6-phosphate + NH4(+). The protein operates within amino-sugar metabolism; N-acetylneuraminate degradation; D-fructose 6-phosphate from N-acetylneuraminate: step 5/5. Its activity is regulated as follows. Allosterically activated by N-acetylglucosamine 6-phosphate (GlcNAc6P). Its function is as follows. Catalyzes the reversible isomerization-deamination of glucosamine 6-phosphate (GlcN6P) to form fructose 6-phosphate (Fru6P) and ammonium ion. The sequence is that of Glucosamine-6-phosphate deaminase from Escherichia coli O6:H1 (strain CFT073 / ATCC 700928 / UPEC).